Reading from the N-terminus, the 306-residue chain is Phosphatidylserine decarboxylase proenzyme (306 aa).

Catalysis depends on charge relay system; for autoendoproteolytic cleavage activity residues aspartate 98, histidine 155, and serine 259. Serine 259 (schiff-base intermediate with substrate; via pyruvic acid; for decarboxylase activity) is an active-site residue. Serine 259 is modified (pyruvic acid (Ser); by autocatalysis).

It belongs to the phosphatidylserine decarboxylase family. PSD-B subfamily. Prokaryotic type I sub-subfamily. Heterodimer of a large membrane-associated beta subunit and a small pyruvoyl-containing alpha subunit. Pyruvate is required as a cofactor. Post-translationally, is synthesized initially as an inactive proenzyme. Formation of the active enzyme involves a self-maturation process in which the active site pyruvoyl group is generated from an internal serine residue via an autocatalytic post-translational modification. Two non-identical subunits are generated from the proenzyme in this reaction, and the pyruvate is formed at the N-terminus of the alpha chain, which is derived from the carboxyl end of the proenzyme. The autoendoproteolytic cleavage occurs by a canonical serine protease mechanism, in which the side chain hydroxyl group of the serine supplies its oxygen atom to form the C-terminus of the beta chain, while the remainder of the serine residue undergoes an oxidative deamination to produce ammonia and the pyruvoyl prosthetic group on the alpha chain. During this reaction, the Ser that is part of the protease active site of the proenzyme becomes the pyruvoyl prosthetic group, which constitutes an essential element of the active site of the mature decarboxylase.

It is found in the cell membrane. The enzyme catalyses a 1,2-diacyl-sn-glycero-3-phospho-L-serine + H(+) = a 1,2-diacyl-sn-glycero-3-phosphoethanolamine + CO2. It participates in phospholipid metabolism; phosphatidylethanolamine biosynthesis; phosphatidylethanolamine from CDP-diacylglycerol: step 2/2. Catalyzes the formation of phosphatidylethanolamine (PtdEtn) from phosphatidylserine (PtdSer). The chain is Phosphatidylserine decarboxylase proenzyme from Nitrosococcus oceani (strain ATCC 19707 / BCRC 17464 / JCM 30415 / NCIMB 11848 / C-107).